The primary structure comprises 206 residues: Large ribosomal subunit protein uL3 (206 aa).

This sequence belongs to the universal ribosomal protein uL3 family. In terms of assembly, part of the 50S ribosomal subunit. Forms a cluster with proteins L14 and L19.

In terms of biological role, one of the primary rRNA binding proteins, it binds directly near the 3'-end of the 23S rRNA, where it nucleates assembly of the 50S subunit. This is Large ribosomal subunit protein uL3 from Cytophaga hutchinsonii (strain ATCC 33406 / DSM 1761 / CIP 103989 / NBRC 15051 / NCIMB 9469 / D465).